Here is a 167-residue protein sequence, read N- to C-terminus: uncharacterized protein (167 aa).

This is an uncharacterized protein from Aquifex aeolicus (strain VF5).